Reading from the N-terminus, the 86-residue chain is Toxin Td2 (86 aa).

The signal sequence occupies residues 1 to 20; sequence MTRFVLFLNCFFLICMVVEC. The 63-residue stretch at 21–83 folds into the LCN-type CS-alpha/beta domain; the sequence is KEGYLMGADG…TWDRATNTCG (63 aa). 4 disulfide bridges follow: Cys31/Cys82, Cys35/Cys57, Cys43/Cys63, and Cys47/Cys65. Position 84 is an arginine amide (Arg84).

As to expression, expressed by the venom gland.

The protein localises to the secreted. Beta toxins bind voltage-independently at site-4 of sodium channels (Nav) and shift the voltage of activation toward more negative potentials thereby affecting sodium channel activation and promoting spontaneous and repetitive firing. This chain is Toxin Td2, found in Tityus discrepans (Venezuelan scorpion).